Here is a 347-residue protein sequence, read N- to C-terminus: uncharacterized protein (347 aa).

Mn(2+) is bound by residues D207, D218, H279, E312, and E326.

This sequence belongs to the peptidase M24B family. Mn(2+) is required as a cofactor.

This is an uncharacterized protein from Methanocaldococcus jannaschii (strain ATCC 43067 / DSM 2661 / JAL-1 / JCM 10045 / NBRC 100440) (Methanococcus jannaschii).